The following is a 220-amino-acid chain: Sericin-2 (220 aa).

2 stretches are compositionally biased toward low complexity: residues 1-131 and 141-155; these read SSST…ASSS and NESSSSSSSAAQNSA. Positions 1–220 are disordered; it reads SSSTNNSSGS…SSSSSSWSSA (220 aa). A compositionally biased stretch (polar residues) spans 156–165; the sequence is TRSQVINADG. Positions 166–220 are enriched in low complexity; it reads SQSSSSSSSSASNQASATSSSSVSADGSESESSSSSSSSSSSSSESSSSSSWSSA.

Produced exclusively in the middle (MSG) section of silk glands.

Its subcellular location is the secreted. Functionally, provides the silk fibroin thread with a sticky coating. Acts as a cement by sticking silk threads together. In Galleria mellonella (Greater wax moth), this protein is Sericin-2 (SER2).